We begin with the raw amino-acid sequence, 351 residues long: sn-glycerol-3-phosphate import ATP-binding protein UgpC (351 aa).

An ABC transporter domain is found at 4-234 (ITLKDLVKSY…PATLFVAGFI (231 aa)). 36–43 (GPSGCGKS) contributes to the ATP binding site.

Belongs to the ABC transporter superfamily. sn-glycerol-3-phosphate importer (TC 3.A.1.1.3) family. As to quaternary structure, the complex is composed of two ATP-binding proteins (UgpC), two transmembrane proteins (UgpA and UgpE) and a solute-binding protein (UgpB).

The protein resides in the cell inner membrane. The catalysed reaction is sn-glycerol 3-phosphate(out) + ATP + H2O = sn-glycerol 3-phosphate(in) + ADP + phosphate + H(+). Functionally, part of the ABC transporter complex UgpBAEC involved in sn-glycerol-3-phosphate (G3P) import. Responsible for energy coupling to the transport system. The protein is sn-glycerol-3-phosphate import ATP-binding protein UgpC of Ruegeria sp. (strain TM1040) (Silicibacter sp.).